Reading from the N-terminus, the 202-residue chain is Peptide deformylase (202 aa).

Residues C121 and H163 each contribute to the Fe cation site. Residue E164 is part of the active site. Residue H167 participates in Fe cation binding.

Belongs to the polypeptide deformylase family. It depends on Fe(2+) as a cofactor.

It catalyses the reaction N-terminal N-formyl-L-methionyl-[peptide] + H2O = N-terminal L-methionyl-[peptide] + formate. In terms of biological role, removes the formyl group from the N-terminal Met of newly synthesized proteins. Requires at least a dipeptide for an efficient rate of reaction. N-terminal L-methionine is a prerequisite for activity but the enzyme has broad specificity at other positions. In Synechococcus sp. (strain CC9311), this protein is Peptide deformylase.